The primary structure comprises 236 residues: LHFPL tetraspan subfamily member 3 protein (236 aa).

4 consecutive transmembrane segments (helical) span residues 36-56 (IGVL…VCFI), 110-130 (FFIG…TLFF), 140-160 (ICAW…MIFP), and 191-211 (ILAI…FVLG).

The protein belongs to the LHFP family.

The protein resides in the membrane. This is LHFPL tetraspan subfamily member 3 protein from Homo sapiens (Human).